The primary structure comprises 565 residues: MSRSLSECIDQGRGLVPADLVLKHGRVFDLVTGELVQTDVAICGDRIVGTFGTYTGRREIDCRGRILVPGFIDTHLHVESSLVTPFEFDRCVTPRGITTAICDPHEIANVCGLEGIRYFLEASAHLVMDLRVQLSSCVPSTHMETAGAALEAKDLAPLMDHPRVIGLAEFMNFPGVLMKDPGCMAKLEAFRGRHIDGHAPLLRGKDLNGYIAAGIRTEHEATTAEEALEKLRKGMRVLIREGSVSKDLHALVSILTERHAPYLCLCTDDRNPLDIAEHGHIDHMIRTAIRLGAPPLAVYRAASLSAADAFGLKDRGLIAPGRRADIAVLDSLEGCHAALVLAGGVVADDAAFSARSDIEPVARASVKVAEIAPEAFRCPGNRADTPVIGILPGKIITEHLTAEIEPVDGDKRPDPVRDLARIAVIERHGKTGGRATGFVRGFGMARGAIASTVCHDHHNLAVVGIDYADMALAANRLRALEGGFAVAAGGEILAELALPVGGLMSLRPFEEVRDALVTLREAARSLGVTLEEPFLQLAFLALPVIPHLKITDRGMVDVDRFEILP.

The protein belongs to the metallo-dependent hydrolases superfamily. Adenine deaminase family. Requires Mn(2+) as cofactor.

The catalysed reaction is adenine + H2O + H(+) = hypoxanthine + NH4(+). In Cereibacter sphaeroides (strain ATCC 17023 / DSM 158 / JCM 6121 / CCUG 31486 / LMG 2827 / NBRC 12203 / NCIMB 8253 / ATH 2.4.1.) (Rhodobacter sphaeroides), this protein is Adenine deaminase.